The following is a 552-amino-acid chain: HTH-type transcriptional regulator SgrR (552 aa).

The 116-residue stretch at 1–116 (MPSGRLQQQF…LISHLGRSFR (116 aa)) folds into the HTH marR-type domain. Residues 26–49 (LNELADLLNCSRRHMRTLLNTMQA) constitute a DNA-binding region (H-T-H motif). The tract at residues 163 to 493 (ELEADIAHHW…RDWQDDAAQW (331 aa)) is solute-binding.

Functionally, activates the small RNA gene sgrS under glucose-phosphate stress conditions as well as yfdZ. Represses its own transcription under both stress and non-stress conditions. Might act as a sensor of the intracellular accumulation of phosphoglucose by binding these molecules in its C-terminal solute-binding domain. The sequence is that of HTH-type transcriptional regulator SgrR from Salmonella typhi.